Here is a 100-residue protein sequence, read N- to C-terminus: Urease subunit gamma (100 aa).

It belongs to the urease gamma subunit family. In terms of assembly, heterotrimer of UreA (gamma), UreB (beta) and UreC (alpha) subunits. Three heterotrimers associate to form the active enzyme.

The protein localises to the cytoplasm. The enzyme catalyses urea + 2 H2O + H(+) = hydrogencarbonate + 2 NH4(+). Its pathway is nitrogen metabolism; urea degradation; CO(2) and NH(3) from urea (urease route): step 1/1. The sequence is that of Urease subunit gamma from Hahella chejuensis (strain KCTC 2396).